We begin with the raw amino-acid sequence, 502 residues long: Mannitol dehydrogenase 2 (502 aa).

Belongs to the mannitol dehydrogenase family.

The catalysed reaction is D-mannitol + NAD(+) = D-fructose + NADH + H(+). Catalyzes the NAD(H)-dependent interconversion of D-fructose and D-mannitol in the mannitol metabolic pathway. The polypeptide is Mannitol dehydrogenase 2 (Saccharomyces cerevisiae (strain ATCC 204508 / S288c) (Baker's yeast)).